The following is an 876-amino-acid chain: Protein argonaute 17 (876 aa).

Positions 246–338 (PVVDYVAQLL…LPLEVCKIAE (93 aa)) constitute a PAZ domain. The Piwi domain occupies 514–834 (LLIVILPNNN…LSSRARCYIK (321 aa)). A disordered region spans residues 839–859 (GDSTSHTSLPSEEDSSAASET).

It belongs to the argonaute family. Ago subfamily.

Probably involved in the RNA silencing pathway. May bind to short RNAs such as microRNAs (miRNAs) or short interfering RNAs (siRNAs), and represses the translation of mRNAs which are complementary to them. The protein is Protein argonaute 17 (AGO17) of Oryza sativa subsp. japonica (Rice).